The primary structure comprises 770 residues: ATP-dependent RNA helicase HCA4 (770 aa).

Positions 41-69 (KFFKDLPISDPTLKGLRESSFIKLTEIQA) match the Q motif motif. The 175-residue stretch at 72–246 (IPVSLQGHDV…RLSLTDYKTV (175 aa)) folds into the Helicase ATP-binding domain. 85–92 (AKTGSGKT) contributes to the ATP binding site. A DEAD box motif is present at residues 194–197 (DEAD). Positions 278–437 (KLDILFSFIK…SIKPQLQSLL (160 aa)) constitute a Helicase C-terminal domain. Phosphoserine is present on residues Ser692, Ser710, Ser714, and Ser743. The disordered stretch occupies residues 705-724 (GTGNLSDDMSDGDMPDSEGH).

This sequence belongs to the DEAD box helicase family. DDX10/DBP4 subfamily. As to quaternary structure, interacts with the U3 and U14 snoRNAs. Associates with pre-ribosomal complexes.

The protein localises to the nucleus. The protein resides in the nucleolus. The catalysed reaction is ATP + H2O = ADP + phosphate + H(+). ATP-dependent RNA helicase required for ribosome biogenesis. Involved in the release of U14 snoRNA in pre-ribosomal complexes. Required for pre-rRNA cleavage at site A2. This Saccharomyces cerevisiae (strain ATCC 204508 / S288c) (Baker's yeast) protein is ATP-dependent RNA helicase HCA4 (HCA4).